A 386-amino-acid polypeptide reads, in one-letter code: uncharacterized protein (386 aa).

9 helical membrane-spanning segments follow: residues 48 to 68, 78 to 98, 136 to 156, 171 to 191, 213 to 233, 253 to 273, 285 to 305, 316 to 336, and 344 to 364; these read NLIT…MLVY, PSWV…FDAI, LQLD…YFYI, YFSG…LTAI, FLPY…ALLL, VIKA…VFSL, FLTI…VVIV, WNVL…FGVL, and FFCY…HVIA.

Belongs to the CDP-alcohol phosphatidyltransferase class-I family.

It localises to the membrane. This is an uncharacterized protein from Schizosaccharomyces pombe (strain 972 / ATCC 24843) (Fission yeast).